Consider the following 313-residue polypeptide: Cytochrome c oxidase assembly protein COX18, mitochondrial (313 aa).

Residues 209 to 229 (SLPLDAAPMLIPIILGTVSMI) traverse the membrane as a helical segment. Over 230-272 (NVEYNGKTMQATAVGTSGITTATDTQSRTSQTVNSILTATRLS) the chain is Mitochondrial matrix. The chain crosses the membrane as a helical span at residues 273–293 (TIFLIGVSTQASVLLSLYWIT). Topologically, residues 294–313 (SQVYSLIQNRILDLLWPYQR) are mitochondrial intermembrane.

The protein belongs to the OXA1/ALB3/YidC family.

Its subcellular location is the mitochondrion inner membrane. Required for the insertion of integral membrane proteins into the mitochondrial inner membrane. Essential for the activity and assembly of cytochrome c oxidase. The chain is Cytochrome c oxidase assembly protein COX18, mitochondrial (COX18) from Kluyveromyces lactis (strain ATCC 8585 / CBS 2359 / DSM 70799 / NBRC 1267 / NRRL Y-1140 / WM37) (Yeast).